A 213-amino-acid chain; its full sequence is MDIHVLNHPLVDHKLTVLRDKNTPSSTFRELVSELVMLEAYEATRDIEVVDKPIETPVAPMIGKHIAAPAPIIVPVLRAGLGMLDGMTKMIPSAEVGFLGMKRDEENPTQQITYANRLPEDLTGRQCFLIDPMLATGGTLVAATHYLAERGAKDITAVCILGAPEGLKFVEENLDPSIKFKLVLCAVDEKLNDKCYIVPGLGDAGDRLYGVID.

Residues Arg78, Arg103, and 131–139 contribute to the 5-phospho-alpha-D-ribose 1-diphosphate site; that span reads DPMLATGGT. Residues Ile197 and 202–204 contribute to the uracil site; that span reads GDA. Asp203 provides a ligand contact to 5-phospho-alpha-D-ribose 1-diphosphate.

It belongs to the UPRTase family. Requires Mg(2+) as cofactor.

The catalysed reaction is UMP + diphosphate = 5-phospho-alpha-D-ribose 1-diphosphate + uracil. Its pathway is pyrimidine metabolism; UMP biosynthesis via salvage pathway; UMP from uracil: step 1/1. Allosterically activated by GTP. Its function is as follows. Catalyzes the conversion of uracil and 5-phospho-alpha-D-ribose 1-diphosphate (PRPP) to UMP and diphosphate. The sequence is that of Uracil phosphoribosyltransferase from Bifidobacterium adolescentis (strain ATCC 15703 / DSM 20083 / NCTC 11814 / E194a).